Consider the following 220-residue polypeptide: Small ribosomal subunit protein uS2 (220 aa).

It belongs to the universal ribosomal protein uS2 family.

In Methanococcus maripaludis (strain DSM 14266 / JCM 13030 / NBRC 101832 / S2 / LL), this protein is Small ribosomal subunit protein uS2.